The sequence spans 330 residues: Fructose-1,6-bisphosphatase class 1 (330 aa).

Mg(2+) is bound by residues Glu84, Asp103, Leu105, and Asp106. Substrate is bound by residues 106-109 (DGSS), Asn196, and Lys262. Glu268 serves as a coordination point for Mg(2+).

Belongs to the FBPase class 1 family. Homotetramer. Mg(2+) serves as cofactor.

The protein resides in the cytoplasm. It catalyses the reaction beta-D-fructose 1,6-bisphosphate + H2O = beta-D-fructose 6-phosphate + phosphate. Its pathway is carbohydrate biosynthesis; gluconeogenesis. This chain is Fructose-1,6-bisphosphatase class 1, found in Shewanella frigidimarina (strain NCIMB 400).